Reading from the N-terminus, the 202-residue chain is Ig delta chain C region (202 aa).

The interval 32–58 (KSKTFKLPETRNSQSSKKANPTPQAKN) is disordered. The segment covering 41-56 (TRNSQSSKKANPTPQA) has biased composition (polar residues). One can recognise an Ig-like domain in the interval 66 to 178 (PTATKNIVGA…TKLNASKSLE (113 aa)).

The polypeptide is Ig delta chain C region (Rattus norvegicus (Rat)).